Here is a 349-residue protein sequence, read N- to C-terminus: tRNA pseudouridine synthase D (349 aa).

Phe-27 is a binding site for substrate. Catalysis depends on Asp-80, which acts as the Nucleophile. Asn-129 contacts substrate. Residues 155–303 enclose the TRUD domain; it reads GVPNYFGAQR…VEASRRAMLL (149 aa). Residue Phe-329 coordinates substrate.

Belongs to the pseudouridine synthase TruD family.

The catalysed reaction is uridine(13) in tRNA = pseudouridine(13) in tRNA. Its function is as follows. Responsible for synthesis of pseudouridine from uracil-13 in transfer RNAs. This Salmonella newport (strain SL254) protein is tRNA pseudouridine synthase D.